A 153-amino-acid chain; its full sequence is MDSIETHAKQLGQQTPLPASPEAAQLDRVPNPHADTDYLARFTAPEFTSLCPVTGQPDFATLVIDYVPDRWLVESKSLKLYLGAFRNHGAFHEDCTVGIGRRLVALLEPRWLRIGGYWYPRGGIPIDVFWQTGEPLKSVWLPDQGVAPYRGRG.

Residues 1 to 30 form a disordered region; sequence MDSIETHAKQLGQQTPLPASPEAAQLDRVP. Residue Cys51 is the Thioimide intermediate of the active site. Catalysis depends on Asp58, which acts as the Proton donor. Substrate contacts are provided by residues 73-75 and 92-93; these read VES and HE.

The protein belongs to the GTP cyclohydrolase I family. QueF type 1 subfamily.

The protein resides in the cytoplasm. It catalyses the reaction 7-aminomethyl-7-carbaguanine + 2 NADP(+) = 7-cyano-7-deazaguanine + 2 NADPH + 3 H(+). Its pathway is tRNA modification; tRNA-queuosine biosynthesis. Catalyzes the NADPH-dependent reduction of 7-cyano-7-deazaguanine (preQ0) to 7-aminomethyl-7-deazaguanine (preQ1). In Methylorubrum extorquens (strain CM4 / NCIMB 13688) (Methylobacterium extorquens), this protein is NADPH-dependent 7-cyano-7-deazaguanine reductase.